Reading from the N-terminus, the 136-residue chain is Small ribosomal subunit protein uS19 (136 aa).

The tract at residues 114-136 (RSRVSHGSAGVGATRSSKFVPLK) is disordered.

It belongs to the universal ribosomal protein uS19 family.

Protein S19 forms a complex with S13 that binds strongly to the 16S ribosomal RNA. The sequence is that of Small ribosomal subunit protein uS19 from Methanosarcina acetivorans (strain ATCC 35395 / DSM 2834 / JCM 12185 / C2A).